We begin with the raw amino-acid sequence, 659 residues long: Interferon-induced GTP-binding protein Mx3 (659 aa).

The Dynamin-type G domain occupies 65–338 (DLALPAIAVI…LISHICKSLP (274 aa)). Residues 75–82 (GDQSSGKS) form a G1 motif region. Residue 75–82 (GDQSSGKS) participates in GTP binding. Residues 100-102 (VTR) are G2 motif. A G3 motif region spans residues 176-179 (DLPG). GTP contacts are provided by residues 176 to 180 (DLPGI) and 245 to 248 (TKPD). Residues 245-248 (TKPD) are G4 motif. The segment at 277–280 (KCRG) is G5 motif. The disordered stretch occupies residues 547 to 568 (EAEEEERKHGKSRSAQSPNLQT). Residues 559–568 (RSAQSPNLQT) show a composition bias toward polar residues. The region spanning 571–659 (MDEIFQHLNA…AQRRLAKFPG (89 aa)) is the GED domain.

It belongs to the TRAFAC class dynamin-like GTPase superfamily. Dynamin/Fzo/YdjA family.

Its subcellular location is the cytoplasm. Functionally, does not show activity against influenza virus or VSV; although it only differs from Mx2 by 8 positions. This is Interferon-induced GTP-binding protein Mx3 (Mx3) from Rattus norvegicus (Rat).